The following is a 208-amino-acid chain: GATA transcription factor 20 (208 aa).

Residues 94–119 (CASCDTTSTPLWRNGPKGPKSLCNAC) form a GATA-type zinc finger.

The protein belongs to the type IV zinc-finger family. Class B subfamily.

It localises to the nucleus. In terms of biological role, transcriptional regulator that specifically binds 5'-GATA-3' or 5'-GAT-3' motifs within gene promoters. The chain is GATA transcription factor 20 from Arabidopsis thaliana (Mouse-ear cress).